A 556-amino-acid polypeptide reads, in one-letter code: CDP-diacylglycerol--glycerol-3-phosphate 3-phosphatidyltransferase, mitochondrial (556 aa).

Residues 1–28 (MAVAAAAAAGPVFWRRLLGLLPGRPGLA) constitute a mitochondrion transit peptide. S49 is modified (phosphoserine). 124–131 (ASLYLGTG) lines the ATP pocket. PLD phosphodiesterase domains follow at residues 215-241 (TIGL…SDSY) and 460-493 (RGWT…GYRS). Active-site residues include H220, K222, and D227.

Belongs to the CDP-alcohol phosphatidyltransferase class-II family.

It is found in the mitochondrion. It carries out the reaction a CDP-1,2-diacyl-sn-glycerol + sn-glycerol 3-phosphate = a 1,2-diacyl-sn-glycero-3-phospho-(1'-sn-glycero-3'-phosphate) + CMP + H(+). The protein operates within phospholipid metabolism; phosphatidylglycerol biosynthesis; phosphatidylglycerol from CDP-diacylglycerol: step 1/2. Its activity is regulated as follows. Activated by calcium and magnesium and inhibited by other bivalent cations. Its function is as follows. Functions in the biosynthesis of the anionic phospholipids phosphatidylglycerol and cardiolipin. This chain is CDP-diacylglycerol--glycerol-3-phosphate 3-phosphatidyltransferase, mitochondrial (PGS1), found in Pongo abelii (Sumatran orangutan).